Reading from the N-terminus, the 78-residue chain is Small integral membrane protein 5 (78 aa).

Residues 32 to 52 (ILAFSVLVVFTATVVLLLLIA) traverse the membrane as a helical segment.

It localises to the membrane. The polypeptide is Small integral membrane protein 5 (SMIM5) (Bos taurus (Bovine)).